The primary structure comprises 330 residues: Malate dehydrogenase (330 aa).

Position 12–18 (12–18) interacts with NAD(+); it reads GAAGQIG. Substrate contacts are provided by arginine 93 and arginine 99. NAD(+) contacts are provided by residues asparagine 106, glutamine 113, and 130–132; that span reads VGN. Positions 132 and 163 each coordinate substrate. The Proton acceptor role is filled by histidine 188.

The protein belongs to the LDH/MDH superfamily. MDH type 2 family.

The enzyme catalyses (S)-malate + NAD(+) = oxaloacetate + NADH + H(+). Its function is as follows. Catalyzes the reversible oxidation of malate to oxaloacetate. This is Malate dehydrogenase from Legionella pneumophila (strain Lens).